Consider the following 221-residue polypeptide: Octanoyltransferase (221 aa).

Positions 29–208 (DEIPDTCLLL…RLTEFLLPAR (180 aa)) constitute a BPL/LPL catalytic domain. Residues 67 to 74 (RGGRITWH), 138 to 140 (AIG), and 151 to 153 (GFA) each bind substrate. The active-site Acyl-thioester intermediate is the C169.

The protein belongs to the LipB family.

The protein resides in the cytoplasm. It catalyses the reaction octanoyl-[ACP] + L-lysyl-[protein] = N(6)-octanoyl-L-lysyl-[protein] + holo-[ACP] + H(+). Its pathway is protein modification; protein lipoylation via endogenous pathway; protein N(6)-(lipoyl)lysine from octanoyl-[acyl-carrier-protein]: step 1/2. Functionally, catalyzes the transfer of endogenously produced octanoic acid from octanoyl-acyl-carrier-protein onto the lipoyl domains of lipoate-dependent enzymes. Lipoyl-ACP can also act as a substrate although octanoyl-ACP is likely to be the physiological substrate. The chain is Octanoyltransferase from Acidothermus cellulolyticus (strain ATCC 43068 / DSM 8971 / 11B).